Consider the following 287-residue polypeptide: Protease HtpX (287 aa).

2 helical membrane passes run 4–24 and 33–53; these read IFLLIATNMAILLVASIVMSI and GGLLVFAAIFGFGGAFISLAI. His-139 is a Zn(2+) binding site. Glu-140 is an active-site residue. His-143 contacts Zn(2+). Transmembrane regions (helical) follow at residues 154–174 and 195–215; these read LIQGVVNTFVIFAARVVASII and AVVFVLDMLFGILASMIVAYF. Glu-220 is a binding site for Zn(2+).

It belongs to the peptidase M48B family. Zn(2+) is required as a cofactor.

It is found in the cell inner membrane. The polypeptide is Protease HtpX (Shewanella loihica (strain ATCC BAA-1088 / PV-4)).